A 190-amino-acid chain; its full sequence is Interferon alpha-9 (190 aa).

A signal peptide spans 1–23; sequence MARPFAFLMVLVVISYWSTCSLG. 2 cysteine pairs are disulfide-bonded: C24–C122 and C52–C162. Residue N101 is glycosylated (N-linked (GlcNAc...) asparagine).

This sequence belongs to the alpha/beta interferon family.

It localises to the secreted. Functionally, produced by macrophages, IFN-alpha have antiviral activities. Interferon stimulates the production of two enzymes: a protein kinase and an oligoadenylate synthetase. In Mus musculus (Mouse), this protein is Interferon alpha-9 (Ifna9).